Consider the following 488-residue polypeptide: Glutamyl-tRNA(Gln) amidotransferase subunit A (488 aa).

Catalysis depends on charge relay system residues Lys78 and Ser153. Ser177 serves as the catalytic Acyl-ester intermediate.

It belongs to the amidase family. GatA subfamily. Heterotrimer of A, B and C subunits.

The catalysed reaction is L-glutamyl-tRNA(Gln) + L-glutamine + ATP + H2O = L-glutaminyl-tRNA(Gln) + L-glutamate + ADP + phosphate + H(+). In terms of biological role, allows the formation of correctly charged Gln-tRNA(Gln) through the transamidation of misacylated Glu-tRNA(Gln) in organisms which lack glutaminyl-tRNA synthetase. The reaction takes place in the presence of glutamine and ATP through an activated gamma-phospho-Glu-tRNA(Gln). The protein is Glutamyl-tRNA(Gln) amidotransferase subunit A of Caldanaerobacter subterraneus subsp. tengcongensis (strain DSM 15242 / JCM 11007 / NBRC 100824 / MB4) (Thermoanaerobacter tengcongensis).